The primary structure comprises 363 residues: UDP-N-acetylenolpyruvoylglucosamine reductase (363 aa).

The FAD-binding PCMH-type domain maps to 27 to 197 (LGGWATRVVT…LSVDFRLARS (171 aa)). R175 is a catalytic residue. S252 functions as the Proton donor in the catalytic mechanism. E355 is an active-site residue.

This sequence belongs to the MurB family. It depends on FAD as a cofactor.

It localises to the cytoplasm. It catalyses the reaction UDP-N-acetyl-alpha-D-muramate + NADP(+) = UDP-N-acetyl-3-O-(1-carboxyvinyl)-alpha-D-glucosamine + NADPH + H(+). It functions in the pathway cell wall biogenesis; peptidoglycan biosynthesis. Cell wall formation. This chain is UDP-N-acetylenolpyruvoylglucosamine reductase, found in Salinispora arenicola (strain CNS-205).